A 305-amino-acid polypeptide reads, in one-letter code: HTH-type transcriptional regulator KdgR (305 aa).

One can recognise an HTH iclR-type domain in the interval 55–116; the sequence is VSSVLKVFGI…GESEKYSLTL (62 aa). The segment at residues 76–95 is a DNA-binding region (H-T-H motif); sequence ITELSQRVMMSKSTVYRFLQ. The IclR-ED domain occupies 131-300; sequence LIRSADIQMR…ARNISDQMGY (170 aa).

As to quaternary structure, homodimer.

It is found in the cytoplasm. Functionally, transcriptional repressor that negatively regulates the expression of genes involved in pectinolysis and in pectinase secretion. Controls genes involved in pectin catabolism, including the pectinase genes (pelA, pelB, pelC, pelE), genes involved in pectin catabolism (kdgT, ogl, kduI-kdgF) and the outT gene involved in pectinase secretion. Acts by binding directly to KdgR binding sites (KdgR-box) in the gene operator/promoter region. The sequence is that of HTH-type transcriptional regulator KdgR from Dickeya chrysanthemi (Pectobacterium chrysanthemi).